The chain runs to 245 residues: MPNVALFVTCLSDTLFPSVGQATVELLEHLGCEVTFPFEQTCCGQPAYNSGYHEETKKIAKHMIETFEQADAEYIVGPSGSCVMMMRDYPHLFQDDPVWRPRAEAHAAKTFELTQFIVDVLEVTDVGAKFPAKATYHASCHMTRLLGIEAAPGKLLGNVDGLTMVPLANVHNCCGFGGTFSVKMPDVSVQMVDEKVDSILQSGAEVLIGADASCLMNIGGRLHKQGHPIKVMHIAEVLNEGVKQA.

The protein belongs to the LutA/YkgE family.

In terms of biological role, is involved in L-lactate degradation and allows cells to grow with lactate as the sole carbon source. In Exiguobacterium sp. (strain ATCC BAA-1283 / AT1b), this protein is Lactate utilization protein A.